The chain runs to 145 residues: Deoxyuridine 5'-triphosphate nucleotidohydrolase (145 aa).

The protein belongs to the dUTPase family. Requires Mg(2+) as cofactor.

It carries out the reaction dUTP + H2O = dUMP + diphosphate + H(+). In terms of biological role, this enzyme is involved in nucleotide metabolism: it produces dUMP, the immediate precursor of thymidine nucleotides and it decreases the intracellular concentration of dUTP so that uracil cannot be incorporated into DNA. The polypeptide is Deoxyuridine 5'-triphosphate nucleotidohydrolase (DUT) (Fowlpox virus (strain NVSL) (FPV)).